A 212-amino-acid chain; its full sequence is Large ribosomal subunit protein uL3 (212 aa).

Residues 133–152 form a disordered region; that stretch reads RGSMGHGSKYHRRPGSLGAK.

It belongs to the universal ribosomal protein uL3 family. In terms of assembly, part of the 50S ribosomal subunit. Forms a cluster with proteins L14 and L19.

In terms of biological role, one of the primary rRNA binding proteins, it binds directly near the 3'-end of the 23S rRNA, where it nucleates assembly of the 50S subunit. The polypeptide is Large ribosomal subunit protein uL3 (Syntrophomonas wolfei subsp. wolfei (strain DSM 2245B / Goettingen)).